Here is a 328-residue protein sequence, read N- to C-terminus: dTDP-glucose 4,6-dehydratase (328 aa).

NAD(+) contacts are provided by residues 13–14, 37–40, 63–64, 82–86, and Thr-101; these read FI, DALT, DI, and LAAES. Position 86 (Ser-86) interacts with substrate. Thr-126 is a binding site for substrate. Asp-127 functions as the Proton donor in the catalytic mechanism. Residues Glu-128 and Tyr-150 each act as proton acceptor in the active site. Position 150-154 (150-154) interacts with NAD(+); that stretch reads YSASK. Asn-179 is a substrate binding site. Asn-180 is an NAD(+) binding site. Residues 189–190, 205–207, Arg-214, Asn-249, and 272–276 contribute to the substrate site; these read KL, PLY, and DRKGH.

It belongs to the NAD(P)-dependent epimerase/dehydratase family. dTDP-glucose dehydratase subfamily. As to quaternary structure, homodimer. NAD(+) is required as a cofactor.

The catalysed reaction is dTDP-alpha-D-glucose = dTDP-4-dehydro-6-deoxy-alpha-D-glucose + H2O. It participates in antibiotic biosynthesis; streptomycin biosynthesis. Its function is as follows. Involved in the biosynthesis of the streptose moiety of streptomycin. Catalyzes the dehydration of dTDP-D-glucose to form dTDP-6-deoxy-D-xylo-4-hexulose via a three-step process involving oxidation, dehydration and reduction. The sequence is that of dTDP-glucose 4,6-dehydratase from Streptomyces griseus.